A 586-amino-acid polypeptide reads, in one-letter code: Glutathione S-transferase C-terminal domain-containing protein homolog (586 aa).

A GST C-terminal domain is found at 121 to 276 (LGFKESCLLA…GTCAKILGDL (156 aa)).

This sequence belongs to the GSTCD family.

This chain is Glutathione S-transferase C-terminal domain-containing protein homolog, found in Drosophila pseudoobscura pseudoobscura (Fruit fly).